The chain runs to 724 residues: Catalase-peroxidase (724 aa).

The segment at residues 98 to 226 (WHAAGTYRIA…LAAVMMGLIY (129 aa)) is a cross-link (tryptophyl-tyrosyl-methioninium (Trp-Tyr) (with M-252)). H99 (proton acceptor) is an active-site residue. Residues 226–252 (YVNPEGVDGNPDPLKTAHDIRVTFERM) constitute a cross-link (tryptophyl-tyrosyl-methioninium (Tyr-Met) (with W-98)). A heme b-binding site is contributed by H267.

The protein belongs to the peroxidase family. Peroxidase/catalase subfamily. In terms of assembly, homodimer or homotetramer. The cofactor is heme b. Formation of the three residue Trp-Tyr-Met cross-link is important for the catalase, but not the peroxidase activity of the enzyme.

The enzyme catalyses H2O2 + AH2 = A + 2 H2O. The catalysed reaction is 2 H2O2 = O2 + 2 H2O. Bifunctional enzyme with both catalase and broad-spectrum peroxidase activity. The sequence is that of Catalase-peroxidase from Psychromonas ingrahamii (strain DSM 17664 / CCUG 51855 / 37).